The sequence spans 296 residues: Ribosomal protein L11 methyltransferase (296 aa).

4 residues coordinate S-adenosyl-L-methionine: Thr145, Gly166, Asp188, and Asn230.

It belongs to the methyltransferase superfamily. PrmA family.

It localises to the cytoplasm. It catalyses the reaction L-lysyl-[protein] + 3 S-adenosyl-L-methionine = N(6),N(6),N(6)-trimethyl-L-lysyl-[protein] + 3 S-adenosyl-L-homocysteine + 3 H(+). Methylates ribosomal protein L11. The sequence is that of Ribosomal protein L11 methyltransferase from Histophilus somni (strain 2336) (Haemophilus somnus).